The sequence spans 181 residues: CDP-diacylglycerol--glycerol-3-phosphate 3-phosphatidyltransferase (181 aa).

Helical transmembrane passes span 8-28 (PNYL…TFYI), 35-55 (MLGA…GYIA), 64-84 (FGKM…IIML), and 148-168 (IIYL…LTII).

This sequence belongs to the CDP-alcohol phosphatidyltransferase class-I family.

The protein resides in the cell membrane. The enzyme catalyses a CDP-1,2-diacyl-sn-glycerol + sn-glycerol 3-phosphate = a 1,2-diacyl-sn-glycero-3-phospho-(1'-sn-glycero-3'-phosphate) + CMP + H(+). It participates in phospholipid metabolism; phosphatidylglycerol biosynthesis; phosphatidylglycerol from CDP-diacylglycerol: step 1/2. Its function is as follows. This protein catalyzes the committed step to the synthesis of the acidic phospholipids. The polypeptide is CDP-diacylglycerol--glycerol-3-phosphate 3-phosphatidyltransferase (pgsA) (Rickettsia bellii (strain RML369-C)).